The chain runs to 161 residues: Allophycocyanin beta chain (161 aa).

Position 71 is an N4-methylasparagine (Asn71). Cys81 lines the (2R,3E)-phycocyanobilin pocket.

This sequence belongs to the phycobiliprotein family. In terms of assembly, heterodimer of an alpha and a beta chain. Contains one covalently linked phycocyanobilin chromophore.

Its subcellular location is the plastid. The protein resides in the chloroplast thylakoid membrane. Light-harvesting photosynthetic bile pigment-protein from the phycobiliprotein complex. Allophycocyanin has a maximum absorption at approximately 650 nanometers. The chain is Allophycocyanin beta chain (apcB) from Pyropia haitanensis (Red seaweed).